Reading from the N-terminus, the 314-residue chain is Homoserine O-acetyltransferase (314 aa).

Catalysis depends on Cys142, which acts as the Acyl-thioester intermediate. Substrate is bound by residues Lys163 and Ser192. His235 serves as the catalytic Proton acceptor. Glu237 is an active-site residue. Arg249 lines the substrate pocket.

It belongs to the MetA family.

It localises to the cytoplasm. The catalysed reaction is L-homoserine + acetyl-CoA = O-acetyl-L-homoserine + CoA. It participates in amino-acid biosynthesis; L-methionine biosynthesis via de novo pathway; O-acetyl-L-homoserine from L-homoserine: step 1/1. Transfers an acetyl group from acetyl-CoA to L-homoserine, forming acetyl-L-homoserine. This is Homoserine O-acetyltransferase from Azobacteroides pseudotrichonymphae genomovar. CFP2.